A 146-amino-acid chain; its full sequence is MNPAHLLILAAVCVSPLGASSNRPMPLNLYQFKNMVQCTVPNRSWWHFADYGCYCGRGGSGTPVDDLDRCCQIHDNCYNEAEKISRCWPYFKTYSYECSQGTLTCKGGNNACAAAVCDCDRLAAICFAGAPYNDNNYNIDLKARCQ.

The N-terminal stretch at 1–21 (MNPAHLLILAAVCVSPLGASS) is a signal peptide. The propeptide occupies 22-27 (NRPMPL). Intrachain disulfides connect cysteine 38-cysteine 98, cysteine 53-cysteine 145, cysteine 55-cysteine 71, cysteine 70-cysteine 126, cysteine 77-cysteine 119, cysteine 87-cysteine 112, and cysteine 105-cysteine 117. Residues tyrosine 54, glycine 56, and glycine 58 each contribute to the Ca(2+) site. Residue histidine 74 is part of the active site. Aspartate 75 contributes to the Ca(2+) binding site. Aspartate 120 is an active-site residue.

It belongs to the phospholipase A2 family. Group I subfamily. D49 sub-subfamily. The cofactor is Ca(2+). Expressed by the venom gland.

It is found in the secreted. The catalysed reaction is a 1,2-diacyl-sn-glycero-3-phosphocholine + H2O = a 1-acyl-sn-glycero-3-phosphocholine + a fatty acid + H(+). Its function is as follows. PLA2 catalyzes the calcium-dependent hydrolysis of the 2-acyl groups in 3-sn-phosphoglycerides. The polypeptide is Neutral phospholipase A2 B (Naja sputatrix (Malayan spitting cobra)).